Consider the following 462-residue polypeptide: Argininosuccinate lyase (462 aa).

The protein belongs to the lyase 1 family. Argininosuccinate lyase subfamily.

It is found in the cytoplasm. The catalysed reaction is 2-(N(omega)-L-arginino)succinate = fumarate + L-arginine. It functions in the pathway amino-acid biosynthesis; L-arginine biosynthesis; L-arginine from L-ornithine and carbamoyl phosphate: step 3/3. The sequence is that of Argininosuccinate lyase from Rippkaea orientalis (strain PCC 8801 / RF-1) (Cyanothece sp. (strain PCC 8801)).